A 782-amino-acid chain; its full sequence is MQGEESLRILVEPEGDSFPLMEISTCETEASEQWDYVLVAQRHTQRDPRQARQQQFLEELRRKGFHIKVIRDQKQVFFGIRADNSVFGLYRTLLLEPEGPAPHAELAAPTTIPVTTSLRIRIVNFVVMNNKTSAGETFEDLMKDGVFEARFPLHKGEGRLKKTWARWRHMFREQPVDEIRNYFGEKVALYFVWLGWYTYMLVPAALTGLLVFLSGFSLFEASQISKEICEAHDILMCPLGDHSRRYQRLSETCTFAKLTHLFDNDGTVVFAIFMALWATVFLEIWKRQRARVVLHWDLYVWDEEQEEMALQLINCPDYKLRPYQHSYLRSTVILVLTLLMICLMIGMAHVLVVYRVLASALFSSSAVPFLEEQVTTAVVVTGALVHYVTIIIMTKINRCVALKLCDFEMPRTFSERESRFTIRFFTLQFFTHFSSLIYIAFILGRINGHPGKSTRLAGLWKLEECHASGCMMDLFVQMAIIMGLKQTLSNCVEYLVPWVTHKCRSLRASESGHLPRDPELRDWRRNYLLNPVNTFSLFDEFMEMMIQYGFTTIFVAAFPLAPLLALFSNLVEIRLDAIKMVWLQRRLVPRKAKDIGTWLQVLETIGVLAVIANGMVIAFTSEFIPRVVYKYRYSPCLKEGNSTVDCLKGYVNHSLSVFHTKDFQDPDGIEGSENVTLCRYRDYRNPPDYNFSEQFWFLLAIRLAFVILFEHVALCIKLIAAWFVPDIPQSVKNKVLEVKYQRLREKMWHGRQRLGGVGAGSRPPMPAHPTPASIFSARSTDV.

Topologically, residues 1-198 (MQGEESLRIL…LYFVWLGWYT (198 aa)) are cytoplasmic. A helical transmembrane segment spans residues 199–219 (YMLVPAALTGLLVFLSGFSLF). The Extracellular segment spans residues 220–264 (EASQISKEICEAHDILMCPLGDHSRRYQRLSETCTFAKLTHLFDN). The residue at position 250 (Ser-250) is a Phosphoserine; by PKA. The chain crosses the membrane as a helical span at residues 265-285 (DGTVVFAIFMALWATVFLEIW). The Cytoplasmic portion of the chain corresponds to 286 to 331 (KRQRARVVLHWDLYVWDEEQEEMALQLINCPDYKLRPYQHSYLRST). Residues 332–352 (VILVLTLLMICLMIGMAHVLV) form a helical membrane-spanning segment. Residues 353 to 373 (VYRVLASALFSSSAVPFLEEQ) lie on the Extracellular side of the membrane. A helical transmembrane segment spans residues 374–394 (VTTAVVVTGALVHYVTIIIMT). The Cytoplasmic portion of the chain corresponds to 395 to 423 (KINRCVALKLCDFEMPRTFSERESRFTIR). The helical transmembrane segment at 424 to 444 (FFTLQFFTHFSSLIYIAFILG) threads the bilayer. The Extracellular segment spans residues 445–552 (RINGHPGKST…EMMIQYGFTT (108 aa)). Residues 553 to 573 (IFVAAFPLAPLLALFSNLVEI) form a helical membrane-spanning segment. Residues 574-604 (RLDAIKMVWLQRRLVPRKAKDIGTWLQVLET) are Cytoplasmic-facing. A helical transmembrane segment spans residues 605 to 625 (IGVLAVIANGMVIAFTSEFIP). The Extracellular portion of the chain corresponds to 626-703 (RVVYKYRYSP…QFWFLLAIRL (78 aa)). N-linked (GlcNAc...) asparagine glycosylation is found at Asn-641, Asn-652, Asn-674, and Asn-690. A helical membrane pass occupies residues 704 to 724 (AFVILFEHVALCIKLIAAWFV). The Cytoplasmic segment spans residues 725 to 782 (PDIPQSVKNKVLEVKYQRLREKMWHGRQRLGGVGAGSRPPMPAHPTPASIFSARSTDV). Residues 756 to 782 (GVGAGSRPPMPAHPTPASIFSARSTDV) form a disordered region.

It belongs to the anoctamin family. Post-translationally, phosphorylated on serine residues by cAMP-dependent protein kinase A (PKA) which is essential for activation of its cation channel activity. As to expression, expressed in the kidney. Expressed in the olfactory epithelium.

Its subcellular location is the cell membrane. The protein localises to the endoplasmic reticulum. The enzyme catalyses a 1,2-diacyl-sn-glycero-3-phospho-L-serine(in) = a 1,2-diacyl-sn-glycero-3-phospho-L-serine(out). It carries out the reaction a beta-D-galactosyl-(1&lt;-&gt;1')-N-acylsphing-4-enine(out) = a beta-D-galactosyl-(1&lt;-&gt;1')-N-acylsphing-4-enine(in). The catalysed reaction is a 1,2-diacyl-sn-glycero-3-phosphocholine(in) = a 1,2-diacyl-sn-glycero-3-phosphocholine(out). It catalyses the reaction Ca(2+)(in) = Ca(2+)(out). The enzyme catalyses Na(+)(in) = Na(+)(out). It carries out the reaction K(+)(in) = K(+)(out). Its activity is regulated as follows. Cation channel activity is activated via phosphorylation on serine residues by cAMP-dependent protein kinase A (PKA). PKA-activated nonselective cation channel. Discriminates poorly among cations but is more permeable to Ca(2+) ions than to monovalent cations. Acts as a calcium-activated calcium permeable channel which may operate as a endoplasmic reticulum (ER) Ca(2+)-leak channel, reducing the loading of the ER Ca(2+) store. Regulates intracellular Ca2+ signals, ion channel activity, and cytokine release in the renal tissue. Plays an important role in olfaction, amplifying cAMP-evoked cyclic nucleotide-gated (CNG) channel currents in the olfactory sensory neurons. Has calcium-dependent phospholipid scramblase activity; scrambles phosphatidylserine, phosphatidylcholine and galactosylceramide. Does not exhibit calcium-activated chloride channel (CaCC) activity. Can inhibit the activity of ANO1. This chain is Anoctamin-9 (ANO9), found in Homo sapiens (Human).